Consider the following 835-residue polypeptide: Leucine--tRNA ligase (835 aa).

The short motif at 42–52 (PYPSGRIHMGH) is the 'HIGH' region element. Positions 612-616 (KMSKS) match the 'KMSKS' region motif. K615 contributes to the ATP binding site.

This sequence belongs to the class-I aminoacyl-tRNA synthetase family.

The protein localises to the cytoplasm. The enzyme catalyses tRNA(Leu) + L-leucine + ATP = L-leucyl-tRNA(Leu) + AMP + diphosphate. The protein is Leucine--tRNA ligase of Rhizorhabdus wittichii (strain DSM 6014 / CCUG 31198 / JCM 15750 / NBRC 105917 / EY 4224 / RW1) (Sphingomonas wittichii).